Consider the following 454-residue polypeptide: CCA-adding enzyme (454 aa).

Residues serine 59 and arginine 62 each contribute to the ATP site. The CTP site is built by serine 59 and arginine 62. Positions 71, 73, and 125 each coordinate Mg(2+). ATP-binding residues include histidine 148, lysine 167, and tyrosine 176. The CTP site is built by histidine 148, lysine 167, and tyrosine 176.

Belongs to the tRNA nucleotidyltransferase/poly(A) polymerase family. Archaeal CCA-adding enzyme subfamily. As to quaternary structure, homodimer. Requires Mg(2+) as cofactor.

The enzyme catalyses a tRNA precursor + 2 CTP + ATP = a tRNA with a 3' CCA end + 3 diphosphate. The catalysed reaction is a tRNA with a 3' CCA end + 2 CTP + ATP = a tRNA with a 3' CCACCA end + 3 diphosphate. In terms of biological role, catalyzes the addition and repair of the essential 3'-terminal CCA sequence in tRNAs without using a nucleic acid template. Adds these three nucleotides in the order of C, C, and A to the tRNA nucleotide-73, using CTP and ATP as substrates and producing inorganic pyrophosphate. tRNA 3'-terminal CCA addition is required both for tRNA processing and repair. Also involved in tRNA surveillance by mediating tandem CCA addition to generate a CCACCA at the 3' terminus of unstable tRNAs. While stable tRNAs receive only 3'-terminal CCA, unstable tRNAs are marked with CCACCA and rapidly degraded. The chain is CCA-adding enzyme from Methanosarcina acetivorans (strain ATCC 35395 / DSM 2834 / JCM 12185 / C2A).